The following is a 187-amino-acid chain: MIVLRSKSPRRKQILESLDLDFRIESEDIDESSLKDEHPLEYLKRISLSKLGTRSKDELLISCDTIVVQENSILQKPENFSQAIEMLERLSGKTHIVYSGLGIYYNRLEQFAFDSSKVHFHTWNKEQIKKYIERYSPFDKAGSYGVQDIEGPVQSFEGSYTNILGFPIRMFFQYHELWKKYLKGNQA.

Aspartate 64 serves as the catalytic Proton acceptor.

This sequence belongs to the Maf family. YhdE subfamily. A divalent metal cation serves as cofactor.

The protein localises to the cytoplasm. The enzyme catalyses dTTP + H2O = dTMP + diphosphate + H(+). It carries out the reaction UTP + H2O = UMP + diphosphate + H(+). Its function is as follows. Nucleoside triphosphate pyrophosphatase that hydrolyzes dTTP and UTP. May have a dual role in cell division arrest and in preventing the incorporation of modified nucleotides into cellular nucleic acids. This is dTTP/UTP pyrophosphatase from Leptospira interrogans serogroup Icterohaemorrhagiae serovar Lai (strain 56601).